The chain runs to 328 residues: Cytochrome c biogenesis protein CcsA (328 aa).

Transmembrane regions (helical) follow at residues 13–33, 46–66, 73–93, 101–121, 146–166, 234–254, 263–283, and 295–315; these read ISFS…LVNL, GIII…IYSG, LYES…VSYF, LNTI…SGLL, MILG…LLVI, IISL…VWAN, WDPK…YLHI, and AIVA…VNLL.

The protein belongs to the CcmF/CycK/Ccl1/NrfE/CcsA family. May interact with Ccs1.

It localises to the plastid. Its subcellular location is the chloroplast thylakoid membrane. Functionally, required during biogenesis of c-type cytochromes (cytochrome c6 and cytochrome f) at the step of heme attachment. This chain is Cytochrome c biogenesis protein CcsA, found in Arabidopsis thaliana (Mouse-ear cress).